The chain runs to 1699 residues: Eukaryotic translation initiation factor 2-alpha kinase gcn-2 (1699 aa).

Positions 22-138 constitute an RWD domain; the sequence is EEKLALDAVY…HRVREFLTDH (117 aa). Protein kinase domains lie at 108-507 and 508-999; these read LTIL…DVVL and VRNK…DEDL. ATP contacts are provided by residues 114–122, Lys-154, 497–505, and Lys-520; these read MADTWEGCV and LGRGGFGDV. 2 disordered regions span residues 572–615 and 632–725; these read DSSL…SLMP and KEWS…SVFE. The span at 669–706 shows a compositional bias: acidic residues; that stretch reads SSDDEDDDDSSEIDWDAESEEVEDEESDDSDEEDEDDG. Positions 711–720 are enriched in polar residues; that stretch reads QLNTETSTGA. The active-site Proton acceptor is the Asp-829.

The protein belongs to the protein kinase superfamily. Ser/Thr protein kinase family. GCN2 subfamily.

It catalyses the reaction L-seryl-[protein] + ATP = O-phospho-L-seryl-[protein] + ADP + H(+). The enzyme catalyses L-threonyl-[protein] + ATP = O-phospho-L-threonyl-[protein] + ADP + H(+). In terms of biological role, serine/threonine-protein kinase which phosphorylates the alpha subunit of eukaryotic translation-initiation factor 2 (eIF2alpha), leading to its inactivation and thus to a rapid reduction of translational initiation and repression of global protein synthesis. Involved in the unfolded protein response (UPR) triggered by several stresses including mitochondrial, osmotic and oxidative stresses, amino acid deprivation and UV irradiation, probably by phosphorylating and inhibiting eIF2alpha. In addition, leads to the selective translation/transcription of some mRNA including atf-5, pha-4 and gpdh-1 which are part of the UPR. Required for maintaining lifespan during amino acid starvation. Involved in hypoxia-mediated adaptive protective response. The polypeptide is Eukaryotic translation initiation factor 2-alpha kinase gcn-2 (Caenorhabditis elegans).